Here is an 861-residue protein sequence, read N- to C-terminus: MARYNPKDTEPKWRAAWASANTFLTPITPDARPKYYVLEMFPYPSGRIHMGHVRNYAMGDVVARYKRAQGFNVLHPMGWDAFGMPAENAAMERGVHPKGWTYDNIAAMREQLKALGLSIDWSREFATCDPEYYGKQQAWFLHLLKRGLVYRKEASVNWDPVDMTVLANEQVIDGKGWRSGATVEKRKLTQWFLRITDYADALIDGLKTLDRWPEKVRIMQENWIGRSKGLRFTFKFDGEAPAGHADGLEVYTTRPDTLFGASFVGIAPEHPLAEQLAAADPAVAAFVAECRKGGTSEADIEGAEKLGRDTGLRVVHPLDPTLTLPVWIANFILMDYGTGAIFACPAHDQRDLDFARKYDLPVLPVVLPPGEDAATFQVGKEAYVGPGAIFNSEFLDGLDVEAAKTEAVNRIEAMDQGQGATVYRLRDWGVSRQRYWGCPIPVIHCEACGPVGVPEDQLPVVLPDDVAFDKPGNPLLRHPTWRHTTCPSCGGKAERETDTLDTFVDSSWYFARFTDPTAAEPISKAAADHWMPVDQYIGGVEHAVLHLLYARFITRALKDEGLVSVEEPFAGLFTQGMVTHEAYKNAAGEWVEPSDVVIAVEGATRSARHAATGEPITIGDIEKMSKSKKNVVAPEDIFEAYGVDAARLFVMSDSPPERDVQWTNSGVEGSWRFTHRVWNEFESQPAGDFAHDDSDAAAVALRKGAHRLIGFVTDSIEGFRFNSGVARLYEFLNMLKAAPAEGASQGVLAARAEALEILARLISPFTPHLAEEAWAHLGKAGMVVDAPWPKADAALAADDERVLPIQINGKRRGEIKVKAGTAEAEVEKIALADPAVLAHLEGLTVRKVIVVKDRIVNIVAG.

A 'HIGH' region motif is present at residues 42 to 52; sequence PYPSGRIHMGH. The 'KMSKS' region signature appears at 623–627; sequence KMSKS. Residue lysine 626 participates in ATP binding.

Belongs to the class-I aminoacyl-tRNA synthetase family.

The protein resides in the cytoplasm. It carries out the reaction tRNA(Leu) + L-leucine + ATP = L-leucyl-tRNA(Leu) + AMP + diphosphate. This Caulobacter sp. (strain K31) protein is Leucine--tRNA ligase.